A 192-amino-acid chain; its full sequence is MTEKEKMLAHQWYDANFDKDLETERVRAKDLCFDFNQTRPSDDSRRQAILTELFGYTLENVAINSPFDTDYGWNVKLGKNVFVNSNCYFMDGGGITIGNDVFIGPSCGFYTAHHPLTPKERNAGLELAQPITIGNNIWFGGNVVVTPGVTIGDGSVIAAGSVVTKDVPPNSLVAGVPAKVIREINENDAPKN.

Belongs to the transferase hexapeptide repeat family.

This chain is Putative acetyltransferase SH0499, found in Staphylococcus haemolyticus (strain JCSC1435).